The primary structure comprises 555 residues: Sesquiterpene synthase 31 (555 aa).

Residues Asp308, Asp312, Asp451, Thr455, and Glu459 each coordinate Mg(2+). The DDXXD motif motif lies at 308-312 (DDTFD).

Belongs to the terpene synthase family. Tpsa subfamily. Mg(2+) is required as a cofactor. It depends on Mn(2+) as a cofactor. As to expression, expressed in stem and leaf trichomes. Detected in roots, fruits and flowers.

It is found in the cytoplasm. The catalysed reaction is (2E,6E)-farnesyl diphosphate = viridiflorene + diphosphate. It participates in secondary metabolite biosynthesis; terpenoid biosynthesis. Functionally, sesquiterpene synthase involved in the production of viridiflorene from (E,E)-farnesyl diphosphate (FPP). Has no activity with (Z,Z)-FPP. Can act with a low efficiency as a monoterpene synthase with geranyl diphosphate as substrate. This Solanum lycopersicum (Tomato) protein is Sesquiterpene synthase 31.